The following is a 288-amino-acid chain: Protein CREG2 (288 aa).

A signal peptide spans 1–31; sequence MSLSGRERPAWPGSRLSWLLCCSALLSPAAG. The disordered stretch occupies residues 78–100; the sequence is AHKEDTHLRPRGSARARPAPAAR. An N-linked (GlcNAc...) asparagine glycan is attached at asparagine 164.

It belongs to the CREG family. As to expression, brain specific.

It localises to the secreted. The chain is Protein CREG2 (Creg2) from Mus musculus (Mouse).